Here is a 727-residue protein sequence, read N- to C-terminus: Putative inactive disease susceptibility protein LOV1 (727 aa).

Residues 44 to 336 (EQSVEALAGH…AAEGIITSSD (293 aa)) enclose the NB-ARC domain. LRR repeat units lie at residues 459–484 (LPLL…IGDL), 485–507 (IHLR…LRNL), 509–530 (LLLY…LKEM), 575–600 (MTKL…LGQL), and 601–626 (RSLE…IVLN).

It belongs to the disease resistance NB-LRR family. RPP8/HRT subfamily.

This is Putative inactive disease susceptibility protein LOV1 (LOV1) from Arabidopsis thaliana (Mouse-ear cress).